A 743-amino-acid chain; its full sequence is Tudor domain-containing protein 3 (743 aa).

Positions 241–262 (KTFGGGGGGARSNLNIGAAGHR) are disordered. Residues 286 to 326 (LVDEKALKHITEMGFSKEASRQALMDNANNLEAALNVLLNS) form the UBA domain. 2 disordered regions span residues 327–365 (SKQKPAVGPPARGRGKGRGRGRSEDEEDLGTARPSAPST) and 380–549 (EEPK…CYER). At Ser-349 the chain carries Phosphoserine. The segment covering 414–431 (PRNDTRQPRNERPPRFQK) has biased composition (basic and acidic residues). Polar residues predominate over residues 432 to 445 (DTPTSKSTVENSVL). Phosphoserine is present on Ser-438. 2 stretches are compositionally biased toward basic and acidic residues: residues 464 to 484 (AEERIKCDRPYSRYDRTKDAS) and 536 to 549 (RENQTGHPDHCYER). A Glycyl lysine isopeptide (Lys-Gly) (interchain with G-Cter in SUMO2) cross-link involves residue Lys-563. A disordered region spans residues 572-603 (TDYPRPVQSNSLGVPNGETAPPLKGRRVGPIK). A Tudor domain is found at 647–707 (VWKPGDECFA…KPVQTEAWEE (61 aa)). Over residues 711–725 (YDHTIEFRRGGDGQP) the composition is skewed to basic and acidic residues. A disordered region spans residues 711–743 (YDHTIEFRRGGDGQPRRSTRPTQQFYQPPRARN). The tract at residues 723–743 (GQPRRSTRPTQQFYQPPRARN) is EBM motif; may mediate interaction with the EJC.

In terms of assembly, component of mRNA stress granules. Interacts with FMR1, FXR1, FXR2, EWSR1, FUS, SERBP1, EEF1A1 and DDX3X or DDX3Y, and with the small nuclear ribonucleoprotein-associated proteins SNRPB and SNRPN. Interacts with 'Lys-48'-linked tetra-ubiquitin, but not with monoubiquitin or 'Lys-63'-linked ubiquitin chains. May interact with the exon junction complex (EJC) composed at least of CASC3, EIF4A3, MAGOH and RBM8A. Interacts with POLR2A (via the C-terminal domain (CTD)).

Its subcellular location is the cytoplasm. The protein resides in the nucleus. Scaffolding protein that specifically recognizes and binds dimethylarginine-containing proteins. Plays a role in the regulation of translation of target mRNAs by binding Arg/Gly-rich motifs (GAR) in dimethylarginine-containing proteins. In nucleus, acts as a coactivator: recognizes and binds asymmetric dimethylation on the core histone tails associated with transcriptional activation (H3R17me2a and H4R3me2a) and recruits proteins at these arginine-methylated loci. In cytoplasm, acts as an antiviral factor that participates in the assembly of stress granules together with G3BP1. This Mus musculus (Mouse) protein is Tudor domain-containing protein 3 (Tdrd3).